Reading from the N-terminus, the 205-residue chain is Protein phosphatase inhibitor 2 family member B (205 aa).

Residues 1–44 (MAASTASHRPIKGILKNKTSTTSSMVASAEQPRRSVDEELSKKS) are disordered. A2 bears the N-acetylalanine mark. 2 required for binding PPP1CC regions span residues 12–17 (KGILKN) and 43–55 (KSQKWDEINILAT). The span at 17–26 (NKTSTTSSMV) shows a compositional bias: polar residues. Positions 31-44 (QPRRSVDEELSKKS) are enriched in basic and acidic residues. S44 is subject to Phosphoserine. Phosphothreonine is present on residues T89 and T92. The tract at residues 111–142 (EPKYRIQEQESSGEEDSDLSPEEREKKRQFEM) is disordered. Residues S121, S122, S127, and S130 each carry the phosphoserine modification. Acidic residues predominate over residues 121 to 130 (SSGEEDSDLS). Basic and acidic residues predominate over residues 131–142 (PEEREKKRQFEM). The interval 147-150 (HYNE) is required for binding PPP1CC catalytic center, displacing metal ions and inhibition of PPP1CC catalytic activity. The tract at residues 163–205 (KDLHDDDEDEEMLETADGESMNTEESNQGSTPSDQQQNKLRSS) is disordered. Residues 167–179 (DDDEDEEMLETAD) show a composition bias toward acidic residues. Over residues 182 to 205 (SMNTEESNQGSTPSDQQQNKLRSS) the composition is skewed to polar residues.

The protein belongs to the protein phosphatase inhibitor 2 family. As to quaternary structure, interacts with PPP1CC. In terms of tissue distribution, only detected in spermatozoa, both heads and tails.

Functionally, inhibitor of protein-phosphatase 1. This Homo sapiens (Human) protein is Protein phosphatase inhibitor 2 family member B.